The following is an 86-amino-acid chain: High affinity immunoglobulin epsilon receptor subunit gamma (86 aa).

The N-terminal stretch at 1-18 is a signal peptide; that stretch reads MIPAVVLLLLLLVEQAAA. Residues 19–23 are Extracellular-facing; it reads LGEPQ. The chain crosses the membrane as a helical span at residues 24–44; sequence LCYILDAILFLYGIVLTLLYC. Residues 45 to 86 lie on the Cytoplasmic side of the membrane; it reads RLKLQVRKAAIDSYEKSDGVYTGLSTRNQETYETLKHEKPPQ. Residues 54-82 enclose the ITAM domain; the sequence is AIDSYEKSDGVYTGLSTRNQETYETLKHE. Tyr65 bears the Phosphotyrosine mark. A Phosphoserine modification is found at Ser69. Phosphotyrosine is present on Tyr76. Thr78 carries the post-translational modification Phosphothreonine.

The protein belongs to the CD3Z/FCER1G family. IgE Fc receptor is a tetramer of an alpha chain, a beta chain, and two disulfide linked gamma chains. Associates with FCGR1A; forms a functional signaling complex. The signaling subunit of immunoglobulin gamma (IgG) Fc receptor complex. As a homodimer or a heterodimer of CD247 and FCER1G, associates with the ligand binding subunit FCGR3A to form a functional receptor complex. Associates with CLEC6A. Interacts with CLEC4E. Interacts (via ITAM domain) with SYK (via SH2 domains); activates SYK, enabling integrin-mediated activation of neutrophils and macrophages. Interacts with common beta chain of interleukin 3 receptor CSF2RB and recruits SYK in response to IL3 stimulation; this interaction is direct. Interacts with CD300LH; the interaction may be indirect. Interacts with CD300LD. Interacts with TARM1.

It is found in the cell membrane. Its function is as follows. Adapter protein containing an immunoreceptor tyrosine-based activation motif (ITAM) that transduces activation signals from various immunoreceptors. As a component of the high-affinity immunoglobulin E (IgE) receptor, mediates allergic inflammatory signaling in mast cells. As a constitutive component of interleukin-3 receptor complex, selectively mediates interleukin 4/IL4 production b basophils priming T-cells toward effector T-helper 2 subset. Associates with pattern recognition receptors CLEC4D and CLEC4E to form a functional signaling complex in myeloid cells. Binding of mycobacterial trehalose 6,6'-dimycolate (TDM) to this receptor complex leads to phosphorylation of ITAM, triggering activation of SYK, CARD9 and NF-kappa-B, consequently driving maturation of antigen-presenting cells and shaping antigen-specific priming of T-cells toward effector T-helper 1 and T-helper 17 cell subtypes. May function cooperatively with other activating receptors. Functionally linked to integrin beta-2/ITGB2-mediated neutrophil activation. Also involved in integrin alpha-2/ITGA2-mediated platelet activation. This chain is High affinity immunoglobulin epsilon receptor subunit gamma (FCER1G), found in Sus scrofa (Pig).